The sequence spans 289 residues: Pre-mRNA-splicing factor cwf23 (289 aa).

One can recognise a J domain in the interval 9–74 (DYYELLGINE…QLRKAYDSER (66 aa)). Residues 129–148 (ESANLRRQRENRLREEQEQS) show a composition bias toward basic and acidic residues. Disordered regions lie at residues 129 to 161 (ESAN…SKIS) and 269 to 289 (KQKH…TMNA).

The protein belongs to the DnaJ family. In terms of assembly, belongs to the 40S cdc5-associated complex (or cwf complex), a spliceosome sub-complex reminiscent of a late-stage spliceosome composed of the U2, U5 and U6 snRNAs and at least brr2, cdc5, cwf2/prp3, cwf3/syf1, cwf4/syf3, cwf5/ecm2, spp42/cwf6, cwf7/spf27, cwf8, cwf9, cwf10, cwf11, cwf12, prp45/cwf13, cwf14, cwf15, cwf16, cwf17, cwf18, cwf19, cwf20, cwf21, cwf22, cwf23, cwf24, cwf25, cwf26, cyp7/cwf27, cwf28, cwf29/ist3, lea1, msl1, prp5/cwf1, prp10, prp12/sap130, prp17, prp22, sap61, sap62, sap114, sap145, slu7, smb1, smd1, smd3, smf1, smg1 and syf2.

The protein resides in the cytoplasm. The protein localises to the nucleus. Involved in pre-mRNA splicing. May be involved in endoplasmic reticulum-associated protein degradation (ERAD) and required for growth at low and high temperatures. The sequence is that of Pre-mRNA-splicing factor cwf23 (cwf23) from Schizosaccharomyces pombe (strain 972 / ATCC 24843) (Fission yeast).